We begin with the raw amino-acid sequence, 481 residues long: MYAAVKPLSNYLRLKTVRIYDPIFTLHSKCTIVILLTCTFLLSAKQYFGEPILCLSSERQADYVQSYCWTMGTYILPAEVDRDGGSSWEYALYAPTSTAAETFNVSSLRALVAQNEQYARFISIAEGVGPETRGVTKRMYLRYYQWVFMILLFQSLLFYFPSFLWKVWEGQRMEQLCCEVGDALIVEATYRTRLQMLTRYFRAQFAPIHWCYSIKYAFCELLNVFISILNFWLMDVVFNGFWYKYIHALAAIPVYDWNLWNLMTSRVFPKVAKCEMFVYGPSGTPNIMDILCVLPLNILNEKIFAVLYVWFLFIALLAIMNILYRLLVICCPELRLQLLRTHLNGMPKSHVREVLASAGYGDWFVLMCVSINVNPTLFRELLEQLYAKLNQARCTEPVFAEQPCQQVPQLAQVPQLFSHAKLDRCPSRNCSLLIDPTADRHSICTESSHRVTAMPTAPTLNLMAPNDEIISMDRFFHESHA.

The Cytoplasmic segment spans residues 1-21 (MYAAVKPLSNYLRLKTVRIYD). The chain crosses the membrane as a helical span at residues 22–42 (PIFTLHSKCTIVILLTCTFLL). Topologically, residues 43 to 144 (SAKQYFGEPI…VTKRMYLRYY (102 aa)) are extracellular. Residues 145–165 (QWVFMILLFQSLLFYFPSFLW) form a helical membrane-spanning segment. At 166 to 220 (KVWEGQRMEQLCCEVGDALIVEATYRTRLQMLTRYFRAQFAPIHWCYSIKYAFCE) the chain is on the cytoplasmic side. Residues 221–241 (LLNVFISILNFWLMDVVFNGF) form a helical membrane-spanning segment. At 242 to 302 (WYKYIHALAA…VLPLNILNEK (61 aa)) the chain is on the extracellular side. The chain crosses the membrane as a helical span at residues 303–323 (IFAVLYVWFLFIALLAIMNIL). The Cytoplasmic portion of the chain corresponds to 324 to 481 (YRLLVICCPE…MDRFFHESHA (158 aa)).

This sequence belongs to the pannexin family. As to expression, uniform expression in the imaginal wing disk. Expressed in an outer layer of the pupal developing CNS. Also expressed in pupal retina: cone cells and primary pigment cells.

The protein localises to the cell membrane. Its subcellular location is the cell junction. The protein resides in the gap junction. In terms of biological role, structural components of the gap junctions. This Drosophila melanogaster (Fruit fly) protein is Innexin inx6 (Inx6).